A 724-amino-acid chain; its full sequence is Solute carrier organic anion transporter family member 4C1 (724 aa).

The Cytoplasmic portion of the chain corresponds to 1–105 (MKSAKGIENL…QCLQRCNTPG (105 aa)). S15, S16, S24, S26, and S28 each carry phosphoserine. Positions 30 to 71 (IEVSALSSDPQRENSQPQELQKPQEPQKSPEPSLPSAPPNVS) are disordered. Over residues 44-60 (SQPQELQKPQEPQKSPE) the composition is skewed to low complexity. A helical transmembrane segment spans residues 106–126 (GFLLHYCLLAVTQGIVVNGLV). At 127 to 145 (NISISTVEKRYEMKSSLTG) the chain is on the extracellular side. A helical transmembrane segment spans residues 146–166 (LISSSYDISFCLLSLFVSFFG). At 167-172 (ERGHKP) the chain is on the cytoplasmic side. Residues 173–197 (RWLAFAAFMIGLGALVFSLPQFFSG) form a helical membrane-spanning segment. Over 198–223 (EYKLGSLFEDTCVTTRNSTSCTSSTS) the chain is Extracellular. Residues 224–254 (SLSNYLYVFILGQLLLGAGGTPLYTLGTAFL) traverse the membrane as a helical segment. Residues 255 to 274 (DDSVPTHKSSLYIGTGYAMS) lie on the Cytoplasmic side of the membrane. Residues 275-295 (ILGPAIGYVLGGQLLTIYIDV) form a helical membrane-spanning segment. Over 296–311 (AMGESTDVTEDDPRWL) the chain is Extracellular. A helical membrane pass occupies residues 312–336 (GAWWIGFLLSWIFAWSLIIPFSCFP). The Cytoplasmic segment spans residues 337 to 377 (KHLPGTAEIQAGKTSQAHQSNSNADVKFGKSIKDFPAALKN). A helical membrane pass occupies residues 378-399 (LMKNAVFMCLVLSTSSEALITT). Over 400 to 419 (GFATFLPKFIENQFGLTSSF) the chain is Extracellular. A helical transmembrane segment spans residues 420–443 (AATLGGAVLIPGAALGQILGGFLV). At 444–447 (SKFR) the chain is on the cytoplasmic side. The chain crosses the membrane as a helical span at residues 448 to 471 (MTCKNTMKFALFTSGVALTLSFVF). The Extracellular portion of the chain corresponds to 472–580 (MYAKCENEPF…ETHCAKLPIF (109 aa)). Residues 495-549 (GNLIAPCNANCNCSRSYYYPVCGDGVQYFSPCFAGCSNPVAHRKPKVYYNCSCIE) form the Kazal-like domain. Intrachain disulfides connect C501–C530, C507–C526, and C516–C547. The chain crosses the membrane as a helical span at residues 581-603 (LCIFFIVIIFTFMAGTPITVSIL). Residues 604–612 (RCVNHRQRS) lie on the Cytoplasmic side of the membrane. Residues 613–638 (LALGIQFMVLRLLGTIPGPIIFGFTI) traverse the membrane as a helical segment. The Extracellular segment spans residues 639–672 (DSTCILWDINDCGIKGACWIYDNIKMAHMLVAIS). A helical membrane pass occupies residues 673-690 (VTCKVITMFFNGFAIFLY). Residues 691–724 (KPPPSATDVSFHKENAVVTNVLAEQDLNKIVKEG) lie on the Cytoplasmic side of the membrane.

This sequence belongs to the organo anion transporter (TC 2.A.60) family. In terms of tissue distribution, predominantly expressed in kidney but also weakly expressed in both fetal liver and kidney.

The protein localises to the basolateral cell membrane. It carries out the reaction estrone 3-sulfate(out) = estrone 3-sulfate(in). It catalyses the reaction L-thyroxine(out) = L-thyroxine(in). The enzyme catalyses 3,3',5-triiodo-L-thyronine(out) = 3,3',5-triiodo-L-thyronine(in). The catalysed reaction is chenodeoxycholate(out) = chenodeoxycholate(in). It carries out the reaction glycocholate(out) = glycocholate(in). It catalyses the reaction L-homoarginine(in) = L-homoarginine(out). The enzyme catalyses L-arginine(in) = L-arginine(out). The catalysed reaction is N(omega),N(omega)-dimethyl-L-arginine(out) = N(omega),N(omega)-dimethyl-L-arginine(in). Functionally, mediates the transport of organic anions such as steroids (estrone 3-sulfate, chenodeoxycholate, glycocholate) and thyroid hormones (3,3',5-triiodo-L-thyronine (T3), L-thyroxine (T4)), in the kidney. Capable of transporting cAMP and pharmacological substances such as digoxin, ouabain and methotrexate. Transport is independent of sodium, chloride ion, and ATP. Transport activity is stimulated by an acidic extracellular environment due to increased substrate affinity to the transporter. The driving force for this transport activity is currently not known. The role of hydrogencarbonate (HCO3(-), bicarbonate) as the probable counteranion that exchanges for organic anions is still not well defined. Functions as an uptake transporter at the apical membrane, suggesting a role in renal reabsorption. Involved in the renal secretion of the uremic toxin ADMA (N(omega),N(omega)-dimethyl-L-arginine or asymmetrical dimethylarginine), which is associated to cardiovascular events and mortality, and the structurally related amino acids L-arginine and L-homoarginine (a cardioprotective biomarker). Can act bidirectionally, suggesting a dual protective role of this transport protein; exporting L-homoarginine after being synthesized in proximal tubule cells, and mediating uptake of ADMA from the blood into proximal tubule cells where it is degraded by the enzyme dimethylarginine dimethylaminohydrolase 1 (DDAH1). May be involved in sperm maturation by enabling directed movement of organic anions and compounds within or between cells. This ion-transporting process is important to maintain the strict epididymal homeostasis necessary for sperm maturation. May have a role in secretory functions since seminal vesicle epithelial cells are assumed to secrete proteins involved in decapacitation by modifying surface proteins to facilitate the acquisition of the ability to fertilize the egg. The chain is Solute carrier organic anion transporter family member 4C1 from Homo sapiens (Human).